The following is a 359-amino-acid chain: Trans-enoyl reductase FSL5 (359 aa).

47-50 provides a ligand contact to NADP(+); sequence IDGK. Substrate is bound at residue 134–141; it reads SGVGTIGL. Residues 169-172, 192-195, Tyr210, and 257-258 each bind NADP(+); these read STAT, SPHN, and LE. A substrate-binding site is contributed by 277–281; the sequence is GPTLL. 346–347 serves as a coordination point for NADP(+); sequence VS.

Belongs to the zinc-containing alcohol dehydrogenase family. As to quaternary structure, monomer.

The protein operates within secondary metabolite biosynthesis. Its function is as follows. Trans-enoyl reductase; part of the gene cluster that mediates the biosynthesis of fusarielins F, G and H, decaketide compounds with 5 methylations and a decaline core that act as mycoestrogens as they stimulate growth of MCF-7 breast cancer cells. The initial compound in the pathway is produced by the reducing polyketide synthase FSL1. FSL1 lacks an active enoyl reductase (ER) domain and biosynthesis of fusarielins relies on the trans-acting enoyl reductase FSL5, before it is released through hydrolysis catalyzed by the thioesterase FSL2. Fusarielins F, G, and H have a C11=C12 cis double bond and is fully reduced between C10 and C11 and between C12 and C13. FSL3 can be involved in the formation of the C11=C12 cis double bond by moving a hypothetical C10=C11 or C12=C13 trans double bond to form prefusarielin. Prefusarielin is oxygenated at C15 and C16 by the cytochrome P450 monooxygenase FSL4, resulting in fusarielin F, which subsequently is epoxidized into fusarielin G by the same enzyme. The final step in the pathway is a reduction of the carboxylic acid moiety to yield fusarielin H via a still undetermined mechanism. The protein is Trans-enoyl reductase FSL5 of Gibberella zeae (strain ATCC MYA-4620 / CBS 123657 / FGSC 9075 / NRRL 31084 / PH-1) (Wheat head blight fungus).